We begin with the raw amino-acid sequence, 174 residues long: Large ribosomal subunit protein uL15 (174 aa).

Disordered regions lie at residues 1 to 57 (MKLH…QMRI) and 147 to 174 (PWVV…PQKA). The span at 21-35 (RGIGSGKGKTGGKGM) shows a compositional bias: gly residues.

It belongs to the universal ribosomal protein uL15 family. Part of the 50S ribosomal subunit.

Functionally, binds to the 23S rRNA. The polypeptide is Large ribosomal subunit protein uL15 (Roseiflexus sp. (strain RS-1)).